The sequence spans 137 residues: Proofreading thioesterase EntH (137 aa).

Glu-63 (nucleophile or proton acceptor) is an active-site residue.

This sequence belongs to the thioesterase PaaI family. In terms of assembly, homotetramer. Dimer of dimers. Interacts specifically with the aryl carrier protein (ArCP) domain of EntB.

Its subcellular location is the cytoplasm. It functions in the pathway siderophore biosynthesis; enterobactin biosynthesis. In terms of biological role, required for optimal enterobactin synthesis. Acts as a proofreading enzyme that prevents EntB misacylation by hydrolyzing the thioester bound existing between EntB and wrongly charged molecules. The polypeptide is Proofreading thioesterase EntH (Cronobacter sakazakii (strain ATCC BAA-894) (Enterobacter sakazakii)).